Consider the following 330-residue polypeptide: Solute carrier family 25 member 16 (330 aa).

Solcar repeat units lie at residues 32–118 (FYWL…YKTL), 126–214 (SGHV…LKSV), and 236–326 (LKTH…MKQF). Transmembrane regions (helical) follow at residues 33-52 (YWLRSFLAGGIAGCCAKTTV), 95-112 (GAMMIRIFPYGAIQFMAF), 132-149 (LMAGSMAGMTAVICTYPL), 189-209 (GLMPTILGMAPYAGVSFFTFG), 242-262 (LLCGGVAGAIAQTISYPFDVT), and 297-317 (GLYRGLSLNYIRCVPSQAVAF).

It belongs to the mitochondrial carrier (TC 2.A.29) family. Mostly in thyroid, liver, lung, kidney and to a lesser extent in heart and skeletal muscle.

It is found in the mitochondrion inner membrane. Functionally, may be involved in the transport of coenzyme A in the mitochondrial matrix. Very little is known about the physiological function of this carrier. The protein is Solute carrier family 25 member 16 (SLC25A16) of Bos taurus (Bovine).